A 377-amino-acid chain; its full sequence is Opsin-5 (377 aa).

Over 1–33 the chain is Extracellular; it reads MALNHTALPQDERLPHYLRDEDPFASKLSWEAD. A glycan (N-linked (GlcNAc...) asparagine) is linked at Asn-4. Residues 34 to 54 form a helical membrane-spanning segment; that stretch reads LVAGFYLTIIGILSTFGNGYV. Residues 55 to 74 are Cytoplasmic-facing; that stretch reads LYMSSRRKKKLRPAEIMTIN. Residues 75–95 form a helical membrane-spanning segment; the sequence is LAVCDLGISVVGKPFTIISCF. At 96–108 the chain is on the extracellular side; sequence CHRWVFGWFGCRW. Cys-106 and Cys-183 are joined by a disulfide. A helical membrane pass occupies residues 109–129; sequence YGWAGFFFGCGSLITMTAVSL. The Cytoplasmic segment spans residues 130–150; the sequence is DRYLKICYLSYGVWLKRKHAY. Residues 151–171 form a helical membrane-spanning segment; that stretch reads ICLAVIWAYASFWTTMPLVGL. Over 172 to 197 the chain is Extracellular; the sequence is GDYAPEPFGTSCTLDWWLAQASGGGQ. The chain crosses the membrane as a helical span at residues 198–218; it reads VFILSILFFCLLLPTAVIVFS. Over 219 to 252 the chain is Cytoplasmic; that stretch reads YAKIIAKVKSSSKEVAHFDSRIHSSHVLEVKLTK. Residues 253 to 273 form a helical membrane-spanning segment; that stretch reads VAMLICAGFLIAWIPYAVVSV. Residues 274–288 are Extracellular-facing; that stretch reads WSAFGRPDSIPIQLS. A helical transmembrane segment spans residues 289–309; the sequence is VVPTLLAKSAAMYNPIIYQVI. Residue Lys-296 is modified to N6-(retinylidene)lysine. At 310 to 377 the chain is on the cytoplasmic side; sequence DYRFACCQAG…HSNDGDCGKK (68 aa). Residues Cys-315 and Cys-316 are each lipidated (S-palmitoyl cysteine). Residues 357–377 form a disordered region; the sequence is FTSAHVMDGESHSNDGDCGKK. Positions 363 to 377 are enriched in basic and acidic residues; that stretch reads MDGESHSNDGDCGKK.

The protein belongs to the G-protein coupled receptor 1 family. Opsin subfamily. It is uncertain whether Cys-315 or Cys-316 is palmitoylated. As to expression, expressed in the brain (at protein level). Weakly expressed in the skin and liver (at protein level). Abundantly expressed in striated muscle cells. Expressed in Math7/Atok7-dependent retinal ganglion cells in the ganglion cell layer (at protein level). Additionally expressed in horizontal and amacrine cells in the inner nuclear layer of the retina (at protein level). Expressed around the base of hair follicles and in epidermal and sebaceous gland cells of the outer ear (at protein level). Abundantly expressed in vibrissae hair follicles and weakly expressed in the vibrissae skin pad, dorsal back skin, and tail.

The protein localises to the cell membrane. G-protein coupled receptor which selectively activates G(i) type G proteins via ultraviolet A (UVA) light-mediated activation in the retina. Preferentially binds the chromophore 11-cis retinal and is a bistable protein that displays emission peaks at 380 nm (UVA light) and 470 nm (blue light). Required for the light-response in the inner plexiform layer, and contributes to the regulation of the light-response in the nerve fiber layer, via phosphorylated DAT/SLC6A3 dopamine uptake. Involved in local corneal and retinal circadian rhythm photoentrainment via modulation of the UVA light-induced phase-shift of the retina clock. Acts as a circadian photoreceptor in the outer ear and vibrissal pads, via modulation of circadian clock-gene expression in response to violet light during the light-to-dark transition phase and night phase of the circadian cycle. Required in the retina to negatively regulate hyaloid vessel regression during postnatal development via light-dependent OPN5-SLC32A1-DRD2-VEGFR2 signaling. Involved in the light-dependent regulation of retina and vitreous compartment dopamine levels. This Mus musculus (Mouse) protein is Opsin-5 (Opn5).